A 455-amino-acid polypeptide reads, in one-letter code: Chromosomal replication initiator protein DnaA (455 aa).

The domain I, interacts with DnaA modulators stretch occupies residues 1 to 73; it reads METSLETLWS…RDVVHEILGH (73 aa). The segment at 73 to 116 is domain II; it reads HPVEIQIEIAQGDSNATISAPEVASPPPTASPVENTNTSQRQQA. The tract at residues 92 to 116 is disordered; sequence APEVASPPPTASPVENTNTSQRQQA. The span at 104-116 shows a compositional bias: polar residues; sequence PVENTNTSQRQQA. The tract at residues 117–333 is domain III, AAA+ region; the sequence is SLNPKYVFSR…GALIRAVAYI (217 aa). The ATP site is built by Gly-161, Gly-163, Lys-164, and Thr-165. Residues 334–455 form a domain IV, binds dsDNA region; that stretch reads SISGLPMNVE…GDRIKLANQP (122 aa).

The protein belongs to the DnaA family. In terms of assembly, oligomerizes as a right-handed, spiral filament on DNA at oriC.

The protein resides in the cytoplasm. Plays an essential role in the initiation and regulation of chromosomal replication. ATP-DnaA binds to the origin of replication (oriC) to initiate formation of the DNA replication initiation complex once per cell cycle. Binds the DnaA box (a 9 base pair repeat at the origin) and separates the double-stranded (ds)DNA. Forms a right-handed helical filament on oriC DNA; dsDNA binds to the exterior of the filament while single-stranded (ss)DNA is stabiized in the filament's interior. The ATP-DnaA-oriC complex binds and stabilizes one strand of the AT-rich DNA unwinding element (DUE), permitting loading of DNA polymerase. After initiation quickly degrades to an ADP-DnaA complex that is not apt for DNA replication. Binds acidic phospholipids. In Acaryochloris marina (strain MBIC 11017), this protein is Chromosomal replication initiator protein DnaA.